A 447-amino-acid chain; its full sequence is Phosphoglucosamine mutase (447 aa).

Ser-100 serves as the catalytic Phosphoserine intermediate. Residues Ser-100, Asp-239, Asp-241, and Asp-243 each contribute to the Mg(2+) site. Ser-100 is subject to Phosphoserine.

It belongs to the phosphohexose mutase family. The cofactor is Mg(2+). Activated by phosphorylation.

The enzyme catalyses alpha-D-glucosamine 1-phosphate = D-glucosamine 6-phosphate. Its function is as follows. Catalyzes the conversion of glucosamine-6-phosphate to glucosamine-1-phosphate. The polypeptide is Phosphoglucosamine mutase (Thermoanaerobacter pseudethanolicus (strain ATCC 33223 / 39E) (Clostridium thermohydrosulfuricum)).